Consider the following 550-residue polypeptide: Solute carrier family 22 member 11 (550 aa).

Residues Met1 to Ala10 lie on the Cytoplasmic side of the membrane. A helical membrane pass occupies residues Gly11 to Ile31. Residues Pro32–Lys142 lie on the Extracellular side of the membrane. Asn39, Asn56, and Asn99 each carry an N-linked (GlcNAc...) asparagine glycan. The chain crosses the membrane as a helical span at residues Pro143–Leu163. Residues Ser164–Ser174 lie on the Cytoplasmic side of the membrane. The helical transmembrane segment at Trp175–Ile195 threads the bilayer. The Extracellular segment spans residues Tyr196 to Arg200. A helical membrane pass occupies residues Phe201–Trp221. Residues Thr222 to Met231 lie on the Cytoplasmic side of the membrane. A helical membrane pass occupies residues Thr232 to Leu252. Topologically, residues Arg253–Arg256 are extracellular. Residues Thr257–Pro277 form a helical membrane-spanning segment. The Cytoplasmic segment spans residues Glu278 to Ser346. Residues Cys347–Leu367 traverse the membrane as a helical segment. Residues Gln368–Gln378 lie on the Extracellular side of the membrane. A helical membrane pass occupies residues Ala379–Leu399. Topologically, residues Gly400 to Arg402 are cytoplasmic. A helical transmembrane segment spans residues Thr403–Pro423. Topologically, residues Gln424–Arg430 are extracellular. Residues Val431–Tyr451 form a helical membrane-spanning segment. The Cytoplasmic segment spans residues Lys452–Thr463. The chain crosses the membrane as a helical span at residues Ala464 to Met484. Topologically, residues Ser485–Pro490 are extracellular. Residues Leu491–Phe511 traverse the membrane as a helical segment. Residues Leu512–Leu550 are Cytoplasmic-facing. Positions Lys531 to Leu550 are disordered.

It belongs to the major facilitator (TC 2.A.1) superfamily. Organic cation transporter (TC 2.A.1.19) family. Post-translationally, N-glycosylated. Contains several complex-type N-glycans. Expressed in placental trophoblasts, syncytiotrophoblast and cytotrophoblast. Also located in the proximal tubules in kidneys.

It localises to the cell membrane. The protein resides in the apical cell membrane. Its subcellular location is the basal cell membrane. It carries out the reaction estrone 3-sulfate(out) + glutarate(in) = estrone 3-sulfate(in) + glutarate(out). The catalysed reaction is dehydroepiandrosterone 3-sulfate(out) = dehydroepiandrosterone 3-sulfate(in). The enzyme catalyses prostaglandin F2alpha(out) = prostaglandin F2alpha(in). It catalyses the reaction prostaglandin E2(out) = prostaglandin E2(in). In terms of biological role, antiporter that mediates the transport of conjugated steroids and other specific organic anions at the basal membrane of syncytiotrophoblast and at the apical membrane of proximal tubule epithelial cells, in exchange for anionic compounds. May be responsible for placental absorption of fetal-derived steroid sulfates such as estrone sulfate (E1S) and the steroid hormone precursor dehydroepiandrosterone sulfate (DHEA-S), as well as clearing waste products and xenobiotics from the fetus. Maybe also be involved in placental urate homeostasis. Facilitates the renal reabsorption of organic anions such as urate and derived steroid sulfates. Organic anion glutarate acts as conteranion for E1S renal uptake. Possible transport mode may also include DHEA-S/E1S exchange. Also interacts with inorganic anions such as chloride and hydroxyl ions, therefore possible transport modes may include E1S/Cl(-), E1S/OH(-), urate/Cl(-) and urate/OH(-). Also mediates the transport of prostaglandin E2 (PGE2) and prostaglandin F2-alpha (PGF2-alpha) and may be involved in their renal excretion. Also able to uptake anionic drugs, diuretics, bile salts and ochratoxin A. Mediates the unidirectional efflux of glutamate and aspartate. Glutamate efflux down its transmembrane gradient may drive SLC22A11/OAT4-mediated placental uptake of E1S. This Homo sapiens (Human) protein is Solute carrier family 22 member 11.